A 208-amino-acid chain; its full sequence is Outer-membrane lipoprotein carrier protein (208 aa).

A signal peptide spans M1–A24.

The protein belongs to the LolA family. As to quaternary structure, monomer.

It is found in the periplasm. Functionally, participates in the translocation of lipoproteins from the inner membrane to the outer membrane. Only forms a complex with a lipoprotein if the residue after the N-terminal Cys is not an aspartate (The Asp acts as a targeting signal to indicate that the lipoprotein should stay in the inner membrane). This Dechloromonas aromatica (strain RCB) protein is Outer-membrane lipoprotein carrier protein.